The sequence spans 128 residues: MLTFAPLNFLAIGVGATLGAWLRWVLGLRLNGAGWPWGTLTANLVGGYLIGVMVALIASHPEWPAWIRLAAVTGFLGGLTTFSTFSAETVDMLERGVYATAAAYAGASLAGSLAMTGLGLATVRLLLR.

Transmembrane regions (helical) follow at residues 2 to 22 (LTFA…GAWL), 37 to 57 (WGTL…VALI), 65 to 85 (AWIR…FSTF), and 101 to 121 (AAAY…LGLA). The Na(+) site is built by glycine 77 and threonine 80.

It belongs to the fluoride channel Fluc/FEX (TC 1.A.43) family.

Its subcellular location is the cell inner membrane. It carries out the reaction fluoride(in) = fluoride(out). Its activity is regulated as follows. Na(+) is not transported, but it plays an essential structural role and its presence is essential for fluoride channel function. In terms of biological role, fluoride-specific ion channel. Important for reducing fluoride concentration in the cell, thus reducing its toxicity. The chain is Fluoride-specific ion channel FluC from Bordetella bronchiseptica (strain ATCC BAA-588 / NCTC 13252 / RB50) (Alcaligenes bronchisepticus).